A 518-amino-acid chain; its full sequence is Retinal dehydrogenase 2 (518 aa).

NAD(+)-binding positions include 184–186 (IPW), 210–213 (KPAE), and 264–266 (STE). The active-site Proton acceptor is the E286. C320 serves as the catalytic Nucleophile. Residues 366 to 370 (KQYNK) and E417 each bind NAD(+).

The protein belongs to the aldehyde dehydrogenase family. Homotetramer.

Its subcellular location is the cytoplasm. The enzyme catalyses retinal + NAD(+) + H2O = retinoate + NADH + 2 H(+). It carries out the reaction all-trans-retinal + NAD(+) + H2O = all-trans-retinoate + NADH + 2 H(+). The catalysed reaction is all-trans-13,14-dihydroretinal + NAD(+) + H2O = all-trans-13,14-dihydroretinoate + NADH + 2 H(+). It participates in cofactor metabolism; retinol metabolism. Catalyzes the NAD-dependent oxidation of aldehyde substrates, such as all-trans-retinal and all-trans-13,14-dihydroretinal, to their corresponding carboxylic acids, all-trans-retinoate and all-trans-13,14-dihydroretinoate, respectively. Retinoate signaling is critical for the transcriptional control of many genes, for instance it is crucial for initiation of meiosis in both male and female. Recognizes retinal as substrate, both in its free form and when bound to cellular retinol-binding protein. Lacks activity with benzaldehyde, acetaldehyde and octanal. Displays complete lack of activity with citral. The protein is Retinal dehydrogenase 2 (ALDH1A2) of Gallus gallus (Chicken).